The chain runs to 58 residues: Small ribosomal subunit protein bS21 (58 aa).

The tract at residues 34 to 58 is disordered; it reads KREHYEKPSVKRKKKSEAARKRKFK. Residues 43–58 are compositionally biased toward basic residues; sequence VKRKKKSEAARKRKFK.

This sequence belongs to the bacterial ribosomal protein bS21 family.

The protein is Small ribosomal subunit protein bS21 of Clostridium acetobutylicum (strain ATCC 824 / DSM 792 / JCM 1419 / IAM 19013 / LMG 5710 / NBRC 13948 / NRRL B-527 / VKM B-1787 / 2291 / W).